A 97-amino-acid chain; its full sequence is Large ribosomal subunit protein bL28 (97 aa).

Belongs to the bacterial ribosomal protein bL28 family.

This chain is Large ribosomal subunit protein bL28, found in Rickettsia bellii (strain OSU 85-389).